Reading from the N-terminus, the 338-residue chain is Outer membrane transporter protein TsaT (338 aa).

Positions 1–22 (MNFRRRLCTAALIAALPLASQA) are cleaved as a signal peptide.

As to quaternary structure, part of a two-component transport system composed of TsaT and TsaS.

The protein localises to the cell outer membrane. Its function is as follows. Involved in the uptake of p-toluenesulphonate (TSA). Forms a large, general diffusion pore with a preference for anions. The chain is Outer membrane transporter protein TsaT (tsaT) from Comamonas testosteroni (Pseudomonas testosteroni).